Consider the following 375-residue polypeptide: Tyrosine--tRNA ligase (375 aa).

Residues Tyr-37, Tyr-168, Gln-172, Asp-175, and Gln-190 each contribute to the L-tyrosine site. A 'KMSKS' region motif is present at residues 251–255 (KMSKS). Lys-254 provides a ligand contact to ATP.

It belongs to the class-I aminoacyl-tRNA synthetase family. TyrS type 4 subfamily. Homodimer.

The protein localises to the cytoplasm. It catalyses the reaction tRNA(Tyr) + L-tyrosine + ATP = L-tyrosyl-tRNA(Tyr) + AMP + diphosphate + H(+). Functionally, catalyzes the attachment of tyrosine to tRNA(Tyr) in a two-step reaction: tyrosine is first activated by ATP to form Tyr-AMP and then transferred to the acceptor end of tRNA(Tyr). In Pyrococcus furiosus (strain ATCC 43587 / DSM 3638 / JCM 8422 / Vc1), this protein is Tyrosine--tRNA ligase.